Reading from the N-terminus, the 201-residue chain is Probable nicotinate-nucleotide adenylyltransferase (201 aa).

Belongs to the NadD family.

The enzyme catalyses nicotinate beta-D-ribonucleotide + ATP + H(+) = deamido-NAD(+) + diphosphate. It functions in the pathway cofactor biosynthesis; NAD(+) biosynthesis; deamido-NAD(+) from nicotinate D-ribonucleotide: step 1/1. Its function is as follows. Catalyzes the reversible adenylation of nicotinate mononucleotide (NaMN) to nicotinic acid adenine dinucleotide (NaAD). The protein is Probable nicotinate-nucleotide adenylyltransferase of Neisseria gonorrhoeae (strain ATCC 700825 / FA 1090).